The following is a 237-amino-acid chain: Phosphoglycolate phosphatase (237 aa).

Aspartate 15 (nucleophile) is an active-site residue. Residues aspartate 15, aspartate 17, and aspartate 177 each contribute to the Mg(2+) site.

It belongs to the HAD-like hydrolase superfamily. CbbY/CbbZ/Gph/YieH family. Mg(2+) is required as a cofactor.

It carries out the reaction 2-phosphoglycolate + H2O = glycolate + phosphate. It functions in the pathway organic acid metabolism; glycolate biosynthesis; glycolate from 2-phosphoglycolate: step 1/1. Its function is as follows. Specifically catalyzes the dephosphorylation of 2-phosphoglycolate. Is involved in the dissimilation of the intracellular 2-phosphoglycolate formed during the DNA repair of 3'-phosphoglycolate ends, a major class of DNA lesions induced by oxidative stress. The chain is Phosphoglycolate phosphatase from Caulobacter vibrioides (strain ATCC 19089 / CIP 103742 / CB 15) (Caulobacter crescentus).